Reading from the N-terminus, the 139-residue chain is Serpin-like protein HMSD (139 aa).

An N-terminal signal peptide occupies residues 1–20 (MSISSALAMVFMGAKGNTAA). N-linked (GlcNAc...) asparagine glycosylation is present at Asn50.

This sequence belongs to the serpin family. Highly expressed in dendritic cells and primary leukemia cells, especially those of myeloid lineage.

The protein localises to the secreted. In terms of biological role, putative serine protease inhibitor. This is Serpin-like protein HMSD (HMSD) from Homo sapiens (Human).